The following is a 239-amino-acid chain: Ribosomal RNA small subunit methyltransferase G (239 aa).

Residues Gly80, Phe85, 103-105 (EAS), 131-132 (AE), and Arg150 each bind S-adenosyl-L-methionine.

This sequence belongs to the methyltransferase superfamily. RNA methyltransferase RsmG family.

Its subcellular location is the cytoplasm. In terms of biological role, specifically methylates the N7 position of a guanine in 16S rRNA. The chain is Ribosomal RNA small subunit methyltransferase G from Caldanaerobacter subterraneus subsp. tengcongensis (strain DSM 15242 / JCM 11007 / NBRC 100824 / MB4) (Thermoanaerobacter tengcongensis).